A 742-amino-acid chain; its full sequence is Clamp-binding protein CrfC (742 aa).

A clamp-binding consensus region spans residues Gln41–Pro45. The 337-residue stretch at Ser66–Pro402 folds into the Dynamin-type G domain. The G1 motif stretch occupies residues Gly76–Ser83. The segment at Met102 to Ala104 is G2 motif. The tract at residues Asp236–Gly239 is G3 motif. The segment at Asn297 to Asp300 is G4 motif. The tract at residues Phe331–Ser334 is G5 motif. Positions Arg440–Val472 form a coiled coil.

This sequence belongs to the TRAFAC class dynamin-like GTPase superfamily. Dynamin/Fzo/YdjA family. In terms of assembly, forms homooligomers. Binds to the beta sliding clamp processivity factor (DnaN) in the presence and absence of DNA, may bind to the clamp itself as homodimers or trimers. Homooligomers may be able to bind more than 1 clamp complex.

It localises to the cytoplasm. Functionally, important for the colocalization of sister nascent DNA strands after replication fork passage during DNA replication, and for positioning and subsequent partitioning of sister chromosomes. Does not have GTPase activity on its own. The chain is Clamp-binding protein CrfC (crfC) from Escherichia coli (strain K12).